The chain runs to 360 residues: Hydroxycarboxylic acid receptor 2 (360 aa).

The Extracellular portion of the chain corresponds to 1–30; that stretch reads MSKQNHFLVINGKNCCVFRDENIAKVLPPV. Residues 31–51 form a helical membrane-spanning segment; the sequence is LGLEFVFGLLGNGLALWIFCF. At 52 to 60 the chain is on the cytoplasmic side; sequence HLKSWKSSR. The chain crosses the membrane as a helical span at residues 61–81; the sequence is IFLFNLAVADFLLIICLPFLT. The Extracellular portion of the chain corresponds to 82-98; that stretch reads DNYVQNWDWRFGSIPCR. An intrachain disulfide couples Cys97 to Cys174. A helical transmembrane segment spans residues 99 to 119; the sequence is VMLFMLAMNRQGSIIFLTVVA. Topologically, residues 120-140 are cytoplasmic; the sequence is VDRYFRVVHPHHFLNKISNRT. The chain crosses the membrane as a helical span at residues 141 to 161; it reads AAIISCFLWGITIGLTVHLLY. At 162-189 the chain is on the extracellular side; it reads TDMMTRNGDANLCSSFSICYTFRWHDAM. The chain crosses the membrane as a helical span at residues 190–210; the sequence is FLLEFFLPLGIILFCSGRIIW. The Cytoplasmic portion of the chain corresponds to 211 to 226; it reads SLRQRQMDRHVKIKRA. A helical transmembrane segment spans residues 227-247; that stretch reads INFIMVVAIVFVICFLPSVAV. Residues 248-270 are Extracellular-facing; that stretch reads RIRIFWLLYKHNVRNCDIYSSVD. Residues 271–291 form a helical membrane-spanning segment; the sequence is LAFFTTLSFTYMNSMLDPVVY. The Cytoplasmic portion of the chain corresponds to 292–360; sequence YFSSPSFPNF…SPPYLASTSR (69 aa). The disordered stretch occupies residues 320 to 360; it reads NNRSTSVELTGDPSTIRSIPGALMTDPSEPGSPPYLASTSR. Residues 321–336 show a composition bias toward polar residues; sequence NRSTSVELTGDPSTIR. Ser325 bears the Phosphoserine mark.

This sequence belongs to the G-protein coupled receptor 1 family. Expressed in adipose tissue, lung and spleen.

It localises to the cell membrane. Functionally, acts as a high affinity receptor for both nicotinic acid (also known as niacin) and (D)-beta-hydroxybutyrate and mediates increased adiponectin secretion and decreased lipolysis through G(i)-protein-mediated inhibition of adenylyl cyclase. This pharmacological effect requires nicotinic acid doses that are much higher than those provided by a normal diet. Mediates nicotinic acid-induced apoptosis in mature neutrophils. Receptor activation by nicotinic acid results in reduced cAMP levels which may affect activity of cAMP-dependent protein kinase A and phosphorylation of target proteins, leading to neutrophil apoptosis. The rank order of potency for the displacement of nicotinic acid binding is 5-methyl pyrazole-3-carboxylic acid = pyridine-3-acetic acid &gt; acifran &gt; 5-methyl nicotinic acid = acipimox &gt;&gt; nicotinuric acid = nicotinamide. The polypeptide is Hydroxycarboxylic acid receptor 2 (Hcar2) (Rattus norvegicus (Rat)).